The chain runs to 149 residues: Probable flagellum biosynthesis repressor protein FlbT (149 aa).

Belongs to the FlbT family.

Its function is as follows. Has a post-transcriptional repressor function in flagellum biogenesis. Associates with the 5'-UTR of fljK mRNA and promotes its degradation. In Rhizobium leguminosarum bv. trifolii (strain WSM2304), this protein is Probable flagellum biosynthesis repressor protein FlbT.